A 125-amino-acid polypeptide reads, in one-letter code: Cu-Zn superoxide dismutase-like protein OPG175 (125 aa).

An intrachain disulfide couples cysteine 52 to cysteine 102.

It belongs to the Cu-Zn superoxide dismutase family.

The protein resides in the virion. The protein localises to the host cytoplasm. Its function is as follows. Superoxide dismutase-like protein with no enzymatic activity. This Homo sapiens (Human) protein is Cu-Zn superoxide dismutase-like protein OPG175 (OPG175).